The following is a 111-amino-acid chain: Small ribosomal subunit protein uS10 (111 aa).

Belongs to the universal ribosomal protein uS10 family. Part of the 30S ribosomal subunit.

In terms of biological role, involved in the binding of tRNA to the ribosomes. The sequence is that of Small ribosomal subunit protein uS10 from Ehrlichia ruminantium (strain Welgevonden).